The primary structure comprises 443 residues: Ribosomal protein uS12 methylthiotransferase RimO (443 aa).

In terms of domain architecture, MTTase N-terminal spans 10 to 120 (PRVGFVSLGC…VMQAVHRHLP (111 aa)). [4Fe-4S] cluster-binding residues include C19, C55, C84, C151, C155, and C158. The region spanning 137 to 375 (LTPQHYAYLK…DFQEDISTQR (239 aa)) is the Radical SAM core domain. In terms of domain architecture, TRAM spans 377–443 (EAKIGREMTV…IHDLYAERVV (67 aa)).

It belongs to the methylthiotransferase family. RimO subfamily. [4Fe-4S] cluster serves as cofactor.

It localises to the cytoplasm. It catalyses the reaction L-aspartate(89)-[ribosomal protein uS12]-hydrogen + (sulfur carrier)-SH + AH2 + 2 S-adenosyl-L-methionine = 3-methylsulfanyl-L-aspartate(89)-[ribosomal protein uS12]-hydrogen + (sulfur carrier)-H + 5'-deoxyadenosine + L-methionine + A + S-adenosyl-L-homocysteine + 2 H(+). Its function is as follows. Catalyzes the methylthiolation of an aspartic acid residue of ribosomal protein uS12. This is Ribosomal protein uS12 methylthiotransferase RimO from Azoarcus sp. (strain BH72).